The primary structure comprises 166 residues: NAD(P)H-quinone oxidoreductase subunit I, chloroplastic (166 aa).

4Fe-4S ferredoxin-type domains follow at residues 55–84 (GRIH…VDWK) and 95–124 (LNYS…MTEE). The [4Fe-4S] cluster site is built by Cys-64, Cys-67, Cys-70, Cys-74, Cys-104, Cys-107, Cys-110, and Cys-114.

Belongs to the complex I 23 kDa subunit family. In terms of assembly, NDH is composed of at least 16 different subunits, 5 of which are encoded in the nucleus. It depends on [4Fe-4S] cluster as a cofactor.

The protein localises to the plastid. The protein resides in the chloroplast thylakoid membrane. It catalyses the reaction a plastoquinone + NADH + (n+1) H(+)(in) = a plastoquinol + NAD(+) + n H(+)(out). The catalysed reaction is a plastoquinone + NADPH + (n+1) H(+)(in) = a plastoquinol + NADP(+) + n H(+)(out). In terms of biological role, NDH shuttles electrons from NAD(P)H:plastoquinone, via FMN and iron-sulfur (Fe-S) centers, to quinones in the photosynthetic chain and possibly in a chloroplast respiratory chain. The immediate electron acceptor for the enzyme in this species is believed to be plastoquinone. Couples the redox reaction to proton translocation, and thus conserves the redox energy in a proton gradient. This is NAD(P)H-quinone oxidoreductase subunit I, chloroplastic from Palafoxia arida (Spanish needles).